The primary structure comprises 423 residues: UDP-N-acetylglucosamine 1-carboxyvinyltransferase (423 aa).

Lysine 22 to asparagine 23 is a phosphoenolpyruvate binding site. Arginine 93 contributes to the UDP-N-acetyl-alpha-D-glucosamine binding site. Residue cysteine 117 is the Proton donor of the active site. Cysteine 117 bears the 2-(S-cysteinyl)pyruvic acid O-phosphothioketal mark. Residues arginine 122–leucine 126, aspartate 307, and valine 329 contribute to the UDP-N-acetyl-alpha-D-glucosamine site.

It belongs to the EPSP synthase family. MurA subfamily.

It localises to the cytoplasm. It carries out the reaction phosphoenolpyruvate + UDP-N-acetyl-alpha-D-glucosamine = UDP-N-acetyl-3-O-(1-carboxyvinyl)-alpha-D-glucosamine + phosphate. Its pathway is cell wall biogenesis; peptidoglycan biosynthesis. Functionally, cell wall formation. Adds enolpyruvyl to UDP-N-acetylglucosamine. This Chlorobium chlorochromatii (strain CaD3) protein is UDP-N-acetylglucosamine 1-carboxyvinyltransferase.